The following is a 319-amino-acid chain: Ferrochelatase (319 aa).

His194 and Glu275 together coordinate Fe cation.

It belongs to the ferrochelatase family.

It localises to the cytoplasm. The enzyme catalyses heme b + 2 H(+) = protoporphyrin IX + Fe(2+). It participates in porphyrin-containing compound metabolism; protoheme biosynthesis; protoheme from protoporphyrin-IX: step 1/1. Functionally, catalyzes the ferrous insertion into protoporphyrin IX. The sequence is that of Ferrochelatase from Vibrio vulnificus (strain CMCP6).